The sequence spans 1983 residues: Nonribosomal peptide synthetase verP (1983 aa).

The interval 11 to 405 (FAQAASRCPD…FRGRKDRTVK (395 aa)) is adenylation 1. The 77-residue stretch at 526 to 602 (DRHLDTLLTV…DVAPLITSRA (77 aa)) folds into the Carrier 1 domain. Ser-563 carries the post-translational modification O-(pantetheine 4'-phosphoryl)serine. A condensation 1 region spans residues 769 to 1047 (ETDELTVVLT…GQHFKHALYS (279 aa)). The interval 1089–1469 (QVMGQFPSLI…GRIDRLVKLR (381 aa)) is adenylation 2. The Carrier 2 domain maps to 1584–1662 (ITRPKIEDKL…DQINMVRALL (79 aa)). The residue at position 1622 (Ser-1622) is an O-(pantetheine 4'-phosphoryl)serine. The segment at 1652-1976 (KDQINMVRAL…GGLEHPLFEC (325 aa)) is condensation 2.

The protein belongs to the NRP synthetase family.

It participates in mycotoxin biosynthesis. In terms of biological role, nonribosomal peptide synthetase; part of the gene cluster that mediates the biosynthesis of 11'-deoxyverticillin A, one of the dimeric epipolythiodioxopiperazines (ETPs) from the verticillin family that act as mycotoxins. 11'-deoxyverticillin A is required for normal conidiation. The nonribosomal peptide synthetase verP is speculated to be responsible for condensation of amino acids to form the carbon skeleton of verticillin, whereas the cluster-specific tailoring enzymes are involved in further modifications leading to the production of 11'-deoxyverticillin A. This chain is Nonribosomal peptide synthetase verP, found in Clonostachys rogersoniana.